The sequence spans 414 residues: MIVRIYPSEISGTIKAPQSKSLAIRLIFLSLFTRIHLHNLVLSEDVIDAINSVRALGVEVKNNSEFIPPEKLEIKKKFIKLKGSGTTLRMLIPIVAAIGGEVTIDAEESLRRRPLKRIVEALSNYGISFSSSSLPLTITGKLSSYNIKISGDESSQYISGLIYALHILNGGSIEILPPISSKSYILLTVDLFNRFGSNVKFYGNKIHINPNNLVEFQGEVAGDYGLASFYALSALVSGGRTTIVNLWEPKEYFGDHSIVKILKEMGATSEYLDGKWYVEAKDKYSSIKVNIDDAPDLAMTIAGLAAIAEGTSEITGIERLRIKESDRIESIRKVLGLYGVGSEVKSNSILIFGINKRMLSSPITDCLNDHRVAMMSSALALVNGGVITSAECVSKSNPNYWQDLLSLNAKISIE.

Residues K20, S21, and R25 each contribute to the 3-phosphoshikimate site. K20 provides a ligand contact to phosphoenolpyruvate. The phosphoenolpyruvate site is built by G85 and R113. 3-phosphoshikimate-binding residues include S154, S155, Q156, S181, D296, and K323. Q156 is a phosphoenolpyruvate binding site. Residue D296 is the Proton acceptor of the active site. Phosphoenolpyruvate is bound by residues R327, R371, and K395.

This sequence belongs to the EPSP synthase family. In terms of assembly, monomer.

It localises to the cytoplasm. It carries out the reaction 3-phosphoshikimate + phosphoenolpyruvate = 5-O-(1-carboxyvinyl)-3-phosphoshikimate + phosphate. It participates in metabolic intermediate biosynthesis; chorismate biosynthesis. Catalyzes the transfer of the enolpyruvyl moiety of phosphoenolpyruvate (PEP) to the 5-hydroxyl of shikimate-3-phosphate (S3P) to produce enolpyruvyl shikimate-3-phosphate and inorganic phosphate. In Saccharolobus islandicus (strain Y.G.57.14 / Yellowstone #1) (Sulfolobus islandicus), this protein is 3-phosphoshikimate 1-carboxyvinyltransferase.